Consider the following 250-residue polypeptide: Putative apoptosis inhibitor ORF99 (250 aa).

A BIR repeat occupies 13–78 (RVNSFGGWSK…KFSGDCLYLK (66 aa)).

May act as an apoptosis inhibitor. The chain is Putative apoptosis inhibitor ORF99 from Ostreid herpesvirus 1 (isolate France) (OsHV-1).